The following is a 200-amino-acid chain: 3-isopropylmalate dehydratase small subunit 2 (200 aa).

The protein belongs to the LeuD family. LeuD type 1 subfamily. In terms of assembly, heterodimer of LeuC and LeuD.

It carries out the reaction (2R,3S)-3-isopropylmalate = (2S)-2-isopropylmalate. The protein operates within amino-acid biosynthesis; L-leucine biosynthesis; L-leucine from 3-methyl-2-oxobutanoate: step 2/4. Functionally, catalyzes the isomerization between 2-isopropylmalate and 3-isopropylmalate, via the formation of 2-isopropylmaleate. In Mannheimia succiniciproducens (strain KCTC 0769BP / MBEL55E), this protein is 3-isopropylmalate dehydratase small subunit 2.